A 510-amino-acid chain; its full sequence is MSDDAWLAAQRKVLARTAPAPYADTLGRVERIGDGIAFVSGLADAALDELLRFESGASGFVHTLEADLMSVVLLDDGATVEAGARVTRTGAVIEVPVGEGLLGRVIDPLGRPLDRDEPVATVKRMPIERPAPAIIDRDLVSEPVETGVLIVDALFAVGRGQRELIIGDRATGKTALALDAIVNQKHSDMICIYVAIGQRSTAVQQVIESVRRYGAPERCVFVVAPAASAAGLQWIAPFAGVTIAEYFRDRGQHALVVIDDLTKHAATHRELALLTREPPGREAYPGDIFYVHARLLERAAKLSAKLGGGSLTALPIAETDAGNLSAYIPTNLISITDGQIVLDAALFAANQRPAVDVGLSVSRVGGKAQHPALREVSGRLRLDYAQFLELEMFSRFGGLTDAHVAGKIARGERIRALIAQPRFRPLRTVDEIALLAALAEGVFDAAPPAIATEARAQLAEQLLGAGMAAGWMDAPLDPATQAALVTTVREIVQRLTLEAANVPARTGSGK.

167 to 174 is an ATP binding site; sequence GDRATGKT.

This sequence belongs to the ATPase alpha/beta chains family. F-type ATPases have 2 components, CF(1) - the catalytic core - and CF(0) - the membrane proton channel. CF(1) has five subunits: alpha(3), beta(3), gamma(1), delta(1), epsilon(1). CF(0) has three main subunits: a(1), b(2) and c(9-12). The alpha and beta chains form an alternating ring which encloses part of the gamma chain. CF(1) is attached to CF(0) by a central stalk formed by the gamma and epsilon chains, while a peripheral stalk is formed by the delta and b chains.

Its subcellular location is the cell inner membrane. The enzyme catalyses ATP + H2O + 4 H(+)(in) = ADP + phosphate + 5 H(+)(out). Its function is as follows. Produces ATP from ADP in the presence of a proton gradient across the membrane. The alpha chain is a regulatory subunit. This chain is ATP synthase subunit alpha 1, found in Paraburkholderia xenovorans (strain LB400).